The sequence spans 34 residues: Dermaseptin-S2 (34 aa).

The protein belongs to the frog skin active peptide (FSAP) family. Dermaseptin subfamily. Expressed by the skin glands.

The protein localises to the secreted. Potent antimicrobial peptide with activity against bacteria and protozoa. Also has activity against fungi. Probably acts by disturbing membrane functions with its amphipathic structure. This Phyllomedusa sauvagei (Sauvage's leaf frog) protein is Dermaseptin-S2.